The primary structure comprises 337 residues: Tetraacyldisaccharide 4'-kinase (337 aa).

An ATP-binding site is contributed by 55 to 62 (TIGGNGKT).

Belongs to the LpxK family.

It carries out the reaction a lipid A disaccharide + ATP = a lipid IVA + ADP + H(+). It functions in the pathway glycolipid biosynthesis; lipid IV(A) biosynthesis; lipid IV(A) from (3R)-3-hydroxytetradecanoyl-[acyl-carrier-protein] and UDP-N-acetyl-alpha-D-glucosamine: step 6/6. Functionally, transfers the gamma-phosphate of ATP to the 4'-position of a tetraacyldisaccharide 1-phosphate intermediate (termed DS-1-P) to form tetraacyldisaccharide 1,4'-bis-phosphate (lipid IVA). The chain is Tetraacyldisaccharide 4'-kinase from Blochmanniella pennsylvanica (strain BPEN).